The sequence spans 329 residues: Beta-ketoacyl-[acyl-carrier-protein] synthase III (329 aa).

Catalysis depends on residues Cys114 and His254. An ACP-binding region spans residues 255–259 (QANLR). The active site involves Asn284.

The protein belongs to the thiolase-like superfamily. FabH family. Homodimer.

It localises to the cytoplasm. The enzyme catalyses malonyl-[ACP] + acetyl-CoA + H(+) = 3-oxobutanoyl-[ACP] + CO2 + CoA. The protein operates within lipid metabolism; fatty acid biosynthesis. In terms of biological role, catalyzes the condensation reaction of fatty acid synthesis by the addition to an acyl acceptor of two carbons from malonyl-ACP. Catalyzes the first condensation reaction which initiates fatty acid synthesis and may therefore play a role in governing the total rate of fatty acid production. Possesses both acetoacetyl-ACP synthase and acetyl transacylase activities. Its substrate specificity determines the biosynthesis of branched-chain and/or straight-chain of fatty acids. This Roseiflexus sp. (strain RS-1) protein is Beta-ketoacyl-[acyl-carrier-protein] synthase III.